The primary structure comprises 906 residues: Ectonucleotide pyrophosphatase/phosphodiesterase family member 1 (906 aa).

The tract at residues 1 to 22 is disordered; the sequence is MERDGDQAGHGPRHGSAGNGRE. The Cytoplasmic segment spans residues 1–58; it reads MERDGDQAGHGPRHGSAGNGRELESPAAASLLAPMDLGEEPLEKAERARPAKDPNTYK. A Phosphoserine modification is found at Ser-25. The Di-leucine motif motif lies at 27–34; that stretch reads AAASLLAP. The chain crosses the membrane as a helical; Signal-anchor for type II membrane protein span at residues 59–79; the sequence is VLSLVLSVCVLTTILGCIFGL. Residues 80–906 are Extracellular-facing; the sequence is KPSCAKEVKS…THLPIFSQED (827 aa). SMB domains are found at residues 86 to 126 and 127 to 171; these read EVKS…VEPT and HIWT…DKKS. 10 cysteine pairs are disulfide-bonded: Cys-90-Cys-104, Cys-94-Cys-122, Cys-102-Cys-115, Cys-108-Cys-114, Cys-131-Cys-148, Cys-136-Cys-166, Cys-146-Cys-159, Cys-152-Cys-158, Cys-177-Cys-223, and Cys-185-Cys-397. Asn-161 carries N-linked (GlcNAc...) asparagine glycosylation. Positions 173-573 are phosphodiesterase; that stretch reads VEETCESIDT…APNNGSHGSL (401 aa). Asp-200, Thr-238, and Asn-259 together coordinate AMP. Asp-200 and Thr-238 together coordinate Zn(2+). The AMP-threonine intermediate role is filled by Thr-238. 2 residues coordinate CMP: Thr-238 and Asn-259. Positions 238 and 259 each coordinate dTMP. 2 residues coordinate GMP: Thr-238 and Asn-259. A Phosphothreonine modification is found at Thr-238. Residue Asn-267 is glycosylated (N-linked (GlcNAc...) asparagine). Leu-272, Lys-277, and Tyr-322 together coordinate GMP. 2 residues coordinate AMP: Lys-277 and Tyr-322. 2 residues coordinate CMP: Lys-277 and Tyr-322. Residue Tyr-322 participates in dTMP binding. Asn-323 carries N-linked (GlcNAc...) asparagine glycosylation. Asp-358 lines the AMP pocket. The Zn(2+) site is built by Asp-358, His-362, Asp-405, and His-406. Asp-358 is a CMP binding site. Asp-358 lines the dTMP pocket. GMP is bound at residue Asp-358. His-362 lines the 2',3'-cGAMP pocket. Residue His-406 coordinates AMP. Residue His-406 coordinates CMP. His-406 serves as a coordination point for dTMP. His-406 is a binding site for GMP. 6 cysteine pairs are disulfide-bonded: Cys-413/Cys-512, Cys-462/Cys-849, Cys-596/Cys-653, Cys-607/Cys-707, Cys-609/Cys-692, and Cys-819/Cys-829. An N-linked (GlcNAc...) asparagine glycan is attached at Asn-459. Ser-514 is a 2',3'-cGAMP binding site. Residue His-517 participates in AMP binding. His-517 serves as a coordination point for Zn(2+). His-517 serves as a coordination point for CMP. His-517 is a binding site for dTMP. Residue His-517 coordinates GMP. N-linked (GlcNAc...) asparagine glycans are attached at residues Asn-567 and Asn-624. The segment at 579–628 is linker; the sequence is KPIYNPSHPKEEGFLSQCPIKSTSNDLGCTCDPWIVPIKDFEKQLNLTTE. Residues 635 to 906 form a nuclease-like domain region; the sequence is HMTVPYGRPR…THLPIFSQED (272 aa). Asp-781, Asp-783, Asp-785, Arg-787, and Asp-789 together coordinate Ca(2+).

It belongs to the nucleotide pyrophosphatase/phosphodiesterase family. As to quaternary structure, ectonucleotide pyrophosphatase/phosphodiesterase family member 1: Homodimer. Ectonucleotide pyrophosphatase/phosphodiesterase family member 1: Interacts with INSR; leading to inhibit INSR autophosphorylation and subsequent activation of INSR kinase activity. Ectonucleotide pyrophosphatase/phosphodiesterase family member 1, secreted form: Monomeric. It depends on Zn(2+) as a cofactor. N-glycosylated. Post-translationally, the secreted form is produced through cleavage at Lys-85 by intracellular processing. As to expression, selectively expressed on the surface of antibody-secreting cells. Expressed in osteocytes and osteoclasts.

It is found in the cell membrane. The protein localises to the basolateral cell membrane. It localises to the secreted. The catalysed reaction is Hydrolytically removes 5'-nucleotides successively from the 3'-hydroxy termini of 3'-hydroxy-terminated oligonucleotides.. It catalyses the reaction a ribonucleoside 5'-triphosphate + H2O = a ribonucleoside 5'-phosphate + diphosphate + H(+). It carries out the reaction ATP + H2O = AMP + diphosphate + H(+). The enzyme catalyses UTP + H2O = UMP + diphosphate + H(+). The catalysed reaction is GTP + H2O = GMP + diphosphate + H(+). It catalyses the reaction CTP + H2O = CMP + diphosphate + H(+). It carries out the reaction 2',3'-cGAMP + 2 H2O = GMP + AMP + 2 H(+). The enzyme catalyses P(1),P(4)-bis(5'-adenosyl) tetraphosphate + H2O = AMP + ATP + 2 H(+). The catalysed reaction is 3',5'-cyclic AMP + H2O = AMP + H(+). At low concentrations of ATP, a phosphorylated intermediate is formed which inhibits further hydrolysis. Nucleotide pyrophosphatase that generates diphosphate (PPi) and functions in bone mineralization and soft tissue calcification by regulating pyrophosphate levels. PPi inhibits bone mineralization and soft tissue calcification by binding to nascent hydroxyapatite crystals, thereby preventing further growth of these crystals. Preferentially hydrolyzes ATP, but can also hydrolyze other nucleoside 5' triphosphates such as GTP, CTP and UTP to their corresponding monophosphates with release of pyrophosphate, as well as diadenosine polyphosphates, and also 3',5'-cAMP to AMP. May also be involved in the regulation of the availability of nucleotide sugars in the endoplasmic reticulum and Golgi, and the regulation of purinergic signaling. Inhibits ectopic joint calcification and maintains articular chondrocytes by repressing hedgehog signaling; it is however unclear whether hedgehog inhibition is direct or indirect. Appears to modulate insulin sensitivity. Also involved in melanogenesis. Also able to hydrolyze 2',3'-cGAMP (cyclic GMP-AMP), a second messenger that activates TMEM173/STING and triggers type-I interferon production. 2',3'-cGAMP degradation takes place in the lumen or extracellular space, and not in the cytosol where it is produced; the role of 2',3'-cGAMP hydrolysis is therefore unclear. Not able to hydrolyze the 2',3'-cGAMP linkage isomer 3',3'-cGAMP. The sequence is that of Ectonucleotide pyrophosphatase/phosphodiesterase family member 1 from Mus musculus (Mouse).